We begin with the raw amino-acid sequence, 127 residues long: Glycine cleavage system H protein (127 aa).

Residues Lys22–Glu104 form the Lipoyl-binding domain. Lys63 is subject to N6-lipoyllysine.

The protein belongs to the GcvH family. As to quaternary structure, the glycine cleavage system is composed of four proteins: P, T, L and H. The cofactor is (R)-lipoate.

Its function is as follows. The glycine cleavage system catalyzes the degradation of glycine. The H protein shuttles the methylamine group of glycine from the P protein to the T protein. Is also involved in protein lipoylation via its role as an octanoyl/lipoyl carrier protein intermediate. The protein is Glycine cleavage system H protein of Geobacillus thermodenitrificans (strain NG80-2).